A 22-amino-acid polypeptide reads, in one-letter code: Polydim-I (22 aa).

Expressed by the venom gland.

The protein resides in the secreted. Antibacterial peptide. Acts on the Mycobacterium abscessus subsp. massiliense cell wall. Reduces 40-50% of the bacterial load in macrophages infected with different M.abscessus strains. Is not cytotoxic towards mammalian cells, and shows no hemolytic activity against human erythrocytes. In vivo, reduces the bacterial load in the lungs, spleen, and liver of highly susceptible mice intravenously infected with M.abscessus. In Polybia dimorpha (Neotropical wasp), this protein is Polydim-I.